The following is a 337-amino-acid chain: ERI1 exoribonuclease 3 (337 aa).

The 175-residue stretch at 146-320 (FLVLDFEATC…DDCKNIANIM (175 aa)) folds into the Exonuclease domain. Mg(2+) contacts are provided by Asp150, Glu152, and Asp249. The active-site Proton acceptor is the Glu152. Position 152 (Glu152) interacts with AMP. The active-site Proton acceptor is His307. Residue His307 coordinates AMP. Asp312 is a binding site for Mg(2+).

Interacts with PRNP. It depends on Mg(2+) as a cofactor.

This Homo sapiens (Human) protein is ERI1 exoribonuclease 3 (ERI3).